A 113-amino-acid polypeptide reads, in one-letter code: Large ribosomal subunit protein uL24 (113 aa).

This sequence belongs to the universal ribosomal protein uL24 family. In terms of assembly, part of the 50S ribosomal subunit.

One of two assembly initiator proteins, it binds directly to the 5'-end of the 23S rRNA, where it nucleates assembly of the 50S subunit. Its function is as follows. One of the proteins that surrounds the polypeptide exit tunnel on the outside of the subunit. The chain is Large ribosomal subunit protein uL24 from Rickettsia prowazekii (strain Madrid E).